An 870-amino-acid polypeptide reads, in one-letter code: DNA mismatch repair protein MutS (870 aa).

G621–S628 contributes to the ATP binding site. The interval G813 to L834 is disordered.

Belongs to the DNA mismatch repair MutS family.

This protein is involved in the repair of mismatches in DNA. It is possible that it carries out the mismatch recognition step. This protein has a weak ATPase activity. The protein is DNA mismatch repair protein MutS of Pelobacter propionicus (strain DSM 2379 / NBRC 103807 / OttBd1).